Consider the following 264-residue polypeptide: Rhodanese-like domain-containing protein 4A, chloroplastic (264 aa).

The N-terminal 60 residues, 1 to 60 (MTSLPIILASSPLRNLTKPCSTSQIPKPIQNSTKQPPIHLLTKTNLSVTISQLIITSPVL), are a transit peptide targeting the chloroplast. A helical membrane pass occupies residues 95–115 (FFVAGCTFTYLVVYPAVMFYL). In terms of domain architecture, Rhodanese spans 132-232 (NESDSQLLDI…ARGKNGWLAI (101 aa)).

The protein localises to the plastid. It is found in the chloroplast. The protein resides in the membrane. The chain is Rhodanese-like domain-containing protein 4A, chloroplastic (STR4A) from Arabidopsis thaliana (Mouse-ear cress).